Reading from the N-terminus, the 389-residue chain is Pyruvate synthase subunit PorA (389 aa).

As to quaternary structure, heterotetramer of one alpha, one beta, one delta and one gamma chain.

The enzyme catalyses 2 oxidized [2Fe-2S]-[ferredoxin] + pyruvate + CoA = 2 reduced [2Fe-2S]-[ferredoxin] + acetyl-CoA + CO2 + H(+). The chain is Pyruvate synthase subunit PorA (porA) from Methanocaldococcus jannaschii (strain ATCC 43067 / DSM 2661 / JAL-1 / JCM 10045 / NBRC 100440) (Methanococcus jannaschii).